The primary structure comprises 61 residues: Photosystem II reaction center protein K (61 aa).

The propeptide occupies 1 to 24; the sequence is MLNIFSLICICLNSVLYSSSFFVA. The chain crosses the membrane as a helical span at residues 40–60; that stretch reads MPVIPVLFFLLAFVWQAAVSF.

The protein belongs to the PsbK family. As to quaternary structure, PSII is composed of 1 copy each of membrane proteins PsbA, PsbB, PsbC, PsbD, PsbE, PsbF, PsbH, PsbI, PsbJ, PsbK, PsbL, PsbM, PsbT, PsbX, PsbY, PsbZ, Psb30/Ycf12, at least 3 peripheral proteins of the oxygen-evolving complex and a large number of cofactors. It forms dimeric complexes.

Its subcellular location is the plastid. It is found in the chloroplast thylakoid membrane. One of the components of the core complex of photosystem II (PSII). PSII is a light-driven water:plastoquinone oxidoreductase that uses light energy to abstract electrons from H(2)O, generating O(2) and a proton gradient subsequently used for ATP formation. It consists of a core antenna complex that captures photons, and an electron transfer chain that converts photonic excitation into a charge separation. The sequence is that of Photosystem II reaction center protein K from Morus indica (Mulberry).